A 539-amino-acid polypeptide reads, in one-letter code: Chitin deacetylase 1 (539 aa).

Residues 1–23 (MARYARVATLAACLLFACALADG) form the signal peptide. The Chitin-binding type-2 domain occupies 42–104 (QELCKDKDAG…WKDAVKNCKL (63 aa)). 6 cysteine pairs are disulfide-bonded: cysteine 80/cysteine 93, cysteine 122/cysteine 134, cysteine 129/cysteine 147, cysteine 141/cysteine 156, cysteine 168/cysteine 180, and cysteine 173/cysteine 178. The LDL-receptor class A domain occupies 121–157 (LCQDGFLACGDSTCIERGLFCNGEKDCGDGSDENSCD). Aspartate 206 contacts Zn(2+). 5 cysteine pairs are disulfide-bonded: cysteine 230-cysteine 489, cysteine 354-cysteine 361, cysteine 391-cysteine 397, cysteine 497-cysteine 520, and cysteine 503-cysteine 523. A glycan (N-linked (GlcNAc...) asparagine) is linked at asparagine 244. The Zn(2+) site is built by histidine 261 and histidine 265. An N-linked (GlcNAc...) asparagine glycan is attached at asparagine 296.

This sequence belongs to the carbohydrate esterase 4 (CE4) family. In terms of assembly, interacts with CPAP3-A1. Zn(2+) serves as cofactor. In terms of tissue distribution, highly expressed in epidermis and head. Moderate expression levels in fat body, Malpighian tubule, testis and midgut. Low expression in silk gland and ovary.

The protein resides in the secreted. It carries out the reaction [(1-&gt;4)-N-acetyl-beta-D-glucosaminyl](n) + n H2O = chitosan + n acetate. With respect to regulation, binding to the accessory protein CPAP3-A1 is essential for chitinase activity. Hydrolyzes the N-acetamido groups of N-acetyl-D-glucosamine residues in chitin. In Bombyx mori (Silk moth), this protein is Chitin deacetylase 1.